The following is a 442-amino-acid chain: PTS system oligo-beta-mannoside-specific EIIC component (442 aa).

The PTS EIIC type-3 domain occupies 5 to 411 (ISQFLVPIAG…LIVFVIWFPF (407 aa)). 11 helical membrane-spanning segments follow: residues 28–48 (AFML…LTNL), 67–87 (FGIA…FGIG), 97–117 (EAVF…PFII), 138–157 (GMFL…RRIV), 177–197 (FAAL…NVMV), 205–225 (MHDV…SGII), 228–248 (LIAV…QIII), 286–306 (TVGM…LIFM), 329–349 (PIIF…WVLA), 365–385 (LVPP…INGI), and 391–411 (IMGG…WFPF).

Its subcellular location is the cell membrane. Functionally, the phosphoenolpyruvate-dependent sugar phosphotransferase system (sugar PTS), a major carbohydrate active transport system, catalyzes the phosphorylation of incoming sugar substrates concomitantly with their translocation across the cell membrane. The enzyme II GmuABC PTS system is involved in the transport of oligo-glucomannans such as cellobiose or mannobiose. The chain is PTS system oligo-beta-mannoside-specific EIIC component from Bacillus subtilis (strain 168).